Here is a 279-residue protein sequence, read N- to C-terminus: 3-methyl-2-oxobutanoate hydroxymethyltransferase (279 aa).

Positions 43 and 82 each coordinate Mg(2+). 3-methyl-2-oxobutanoate is bound by residues 43 to 44 (DS), Asp-82, and Lys-112. Position 114 (Glu-114) interacts with Mg(2+). The active-site Proton acceptor is Glu-181.

Belongs to the PanB family. Homodecamer; pentamer of dimers. Requires Mg(2+) as cofactor.

It localises to the cytoplasm. It catalyses the reaction 3-methyl-2-oxobutanoate + (6R)-5,10-methylene-5,6,7,8-tetrahydrofolate + H2O = 2-dehydropantoate + (6S)-5,6,7,8-tetrahydrofolate. Its pathway is cofactor biosynthesis; (R)-pantothenate biosynthesis; (R)-pantoate from 3-methyl-2-oxobutanoate: step 1/2. Functionally, catalyzes the reversible reaction in which hydroxymethyl group from 5,10-methylenetetrahydrofolate is transferred onto alpha-ketoisovalerate to form ketopantoate. In Bacillus pumilus (strain SAFR-032), this protein is 3-methyl-2-oxobutanoate hydroxymethyltransferase.